Reading from the N-terminus, the 157-residue chain is N5-carboxyaminoimidazole ribonucleotide mutase (157 aa).

Substrate is bound by residues S8, D11, and R38.

This sequence belongs to the AIR carboxylase family. Class I subfamily.

It catalyses the reaction 5-carboxyamino-1-(5-phospho-D-ribosyl)imidazole + H(+) = 5-amino-1-(5-phospho-D-ribosyl)imidazole-4-carboxylate. It participates in purine metabolism; IMP biosynthesis via de novo pathway; 5-amino-1-(5-phospho-D-ribosyl)imidazole-4-carboxylate from 5-amino-1-(5-phospho-D-ribosyl)imidazole (N5-CAIR route): step 2/2. Catalyzes the conversion of N5-carboxyaminoimidazole ribonucleotide (N5-CAIR) to 4-carboxy-5-aminoimidazole ribonucleotide (CAIR). The chain is N5-carboxyaminoimidazole ribonucleotide mutase from Methanocaldococcus jannaschii (strain ATCC 43067 / DSM 2661 / JAL-1 / JCM 10045 / NBRC 100440) (Methanococcus jannaschii).